Reading from the N-terminus, the 635-residue chain is Rab11 family-interacting protein 4 (635 aa).

The 36-residue stretch at 49-84 folds into the EF-hand domain; it reads GQGEEVEKLVKCLDPNDLGRINFKDFCRGVFAMKGC. Ca(2+) is bound by residues D62, N64, R68, and D73. Residues 82–635 are necessary for interaction with RAB11A, subcellular location, homo- or heterooligomerization; the sequence is KGCEELLKDV…HNPSILEIKH (554 aa). Disordered stretches follow at residues 147–176 and 216–258; these read GPQE…EKEP and EDYG…QTPR. Residues 216–225 show a composition bias toward acidic residues; that stretch reads EDYGEGDDVD. A coiled-coil region spans residues 279–615; sequence KINLLNDLEA…EEINFRLRQY (337 aa). The region spanning 572-634 is the FIP-RBD domain; sequence EAKNLFATQT…DHNPSILEIK (63 aa).

In terms of assembly, homodimer. Forms a complex with Rab11 (RAB11A or RAB11B) and ARF6. Interacts with RAB11A; the interaction is direct. Forms a heterooligomeric complex with RAB11FIP2, RAB11FIP3 and RAB11FIP5. Interacts with ECPAS. Strongly expressed in the developing retina. Expressed predominantly in neural tissues.

Its subcellular location is the recycling endosome membrane. The protein resides in the cleavage furrow. It is found in the midbody. It localises to the cytoplasmic vesicle. Acts as a regulator of endocytic traffic by participating in membrane delivery. Required for the abscission step in cytokinesis, possibly by acting as an 'address tag' delivering recycling endosome membranes to the cleavage furrow during late cytokinesis. May play a role in differentiation during retinal development, in a Rab11-independent manner. In Mus musculus (Mouse), this protein is Rab11 family-interacting protein 4 (Rab11fip4).